A 220-amino-acid chain; its full sequence is MSFQQRFARALDVGYKNFLSKDAVRNIFAYDNHLRGLVQKECKIHQTPYRVPSDLMVQSASDPARANLFNYSSQLVNHDFFFSGLISPERPSADADLGAINLKPGIDASFGSFGELKSQMVDVGNSVFGDGWLWLVYSPEKSLFSLLCTYNASNAFLWGTGFPKFRTNAIVPLLCVNLWQYAYLDDYGLNGKKMYITKWWDMINWTVVNNRFQATRIESL.

The protein belongs to the mitochondrion-specific ribosomal protein mS42 family. Component of the mitochondrial small ribosomal subunit (mt-SSU). Mature yeast 74S mitochondrial ribosomes consist of a small (37S) and a large (54S) subunit. The 37S small subunit contains a 15S ribosomal RNA (15S mt-rRNA) and at least 32 different proteins. The 54S large subunit contains a 21S rRNA (21S mt-rRNA) and at least 45 different proteins. mS43 forms a dimer with mS42, building a large protuberance adjacent to the mRNA channel exit in the mt-SSU body.

It localises to the mitochondrion. In terms of biological role, component of the mitochondrial ribosome (mitoribosome), a dedicated translation machinery responsible for the synthesis of mitochondrial genome-encoded proteins, including at least some of the essential transmembrane subunits of the mitochondrial respiratory chain. The mitoribosomes are attached to the mitochondrial inner membrane and translation products are cotranslationally integrated into the membrane. The polypeptide is Small ribosomal subunit protein mS42 (Schizosaccharomyces pombe (strain 972 / ATCC 24843) (Fission yeast)).